The chain runs to 111 residues: Cytochrome c (111 aa).

Position 1 is an N-acetylalanine (Ala-1). Cys-22, Cys-25, and His-26 together coordinate heme c. Lys-80 carries the post-translational modification N6,N6,N6-trimethyllysine. Met-88 lines the heme c pocket. An N6,N6,N6-trimethyllysine modification is found at Lys-94.

It belongs to the cytochrome c family. Post-translationally, binds 1 heme c group covalently per subunit.

Its subcellular location is the mitochondrion intermembrane space. In terms of biological role, electron carrier protein. The oxidized form of the cytochrome c heme group can accept an electron from the heme group of the cytochrome c1 subunit of cytochrome reductase. Cytochrome c then transfers this electron to the cytochrome oxidase complex, the final protein carrier in the mitochondrial electron-transport chain. This chain is Cytochrome c, found in Guizotia abyssinica (Niger).